The chain runs to 1420 residues: DNA-directed RNA polymerase subunit beta' (1420 aa).

The Zn(2+) site is built by C71, C73, C86, and C89. Residues D461, D463, and D465 each contribute to the Mg(2+) site. Zn(2+) is bound by residues C815, C889, C896, and C899.

The protein belongs to the RNA polymerase beta' chain family. As to quaternary structure, the RNAP catalytic core consists of 2 alpha, 1 beta, 1 beta' and 1 omega subunit. When a sigma factor is associated with the core the holoenzyme is formed, which can initiate transcription. Mg(2+) is required as a cofactor. It depends on Zn(2+) as a cofactor.

The enzyme catalyses RNA(n) + a ribonucleoside 5'-triphosphate = RNA(n+1) + diphosphate. Its function is as follows. DNA-dependent RNA polymerase catalyzes the transcription of DNA into RNA using the four ribonucleoside triphosphates as substrates. The protein is DNA-directed RNA polymerase subunit beta' of Haemophilus ducreyi (strain 35000HP / ATCC 700724).